The chain runs to 1122 residues: Breast carcinoma-amplified sequence 3 homolog (1122 aa).

The segment at 1 to 41 (MSADSPRRHPSGVVGSGIGLGSGSGTGLGSGSTGGSKSGAA) is disordered. Gly residues predominate over residues 14–37 (VGSGIGLGSGSGTGLGSGSTGGSK). Serine 55 is subject to Phosphoserine. Composition is skewed to low complexity over residues 357 to 377 (GTTA…ASGG), 626 to 641 (GSNS…SLSD), 966 to 987 (TKDN…PSSN), and 1036 to 1051 (LSLE…PLSL). Disordered regions lie at residues 357–382 (GTTA…DAKQ), 620–644 (GVGV…DDSG), 966–990 (TKDN…NKVQ), 1033–1054 (NSRL…LTNG), and 1071–1122 (GVAQ…RRNL). Position 638 is a phosphoserine (serine 638). Residues 1087–1112 (VDDDDEEEEEEEEELDEEAEPDDDER) are compositionally biased toward acidic residues. Positions 1113–1122 (EDRPLGRRNL) are enriched in basic and acidic residues.

The protein belongs to the BCAS3 family. Expressed in all postembryonic pericardial cells, but not in cardioblasts. Also expressed in Garland cells in third instar larvae (at protein level).

It localises to the cytoplasm. Functionally, regulates macropinocytosis in pericardial cells. This Drosophila melanogaster (Fruit fly) protein is Breast carcinoma-amplified sequence 3 homolog (rudhira).